Consider the following 329-residue polypeptide: tRNA N6-adenosine threonylcarbamoyltransferase (329 aa).

Positions 108, 112, and 129 each coordinate Fe cation. Residues 129-133 (YVSGG), aspartate 161, glutamate 182, and serine 261 each bind substrate. Aspartate 289 is a Fe cation binding site.

This sequence belongs to the KAE1 / TsaD family. Fe(2+) serves as cofactor.

It is found in the cytoplasm. It catalyses the reaction L-threonylcarbamoyladenylate + adenosine(37) in tRNA = N(6)-L-threonylcarbamoyladenosine(37) in tRNA + AMP + H(+). Required for the formation of a threonylcarbamoyl group on adenosine at position 37 (t(6)A37) in tRNAs that read codons beginning with adenine. Is probably involved in the transfer of the threonylcarbamoyl moiety of threonylcarbamoyl-AMP (TC-AMP) to the N6 group of A37. This is tRNA N6-adenosine threonylcarbamoyltransferase from Ignicoccus hospitalis (strain KIN4/I / DSM 18386 / JCM 14125).